The following is a 151-amino-acid chain: Ribosomal RNA large subunit methyltransferase H (151 aa).

Residues L73, G100, and 119-124 (LTKLTL) each bind S-adenosyl-L-methionine.

The protein belongs to the RNA methyltransferase RlmH family. Homodimer.

It localises to the cytoplasm. The catalysed reaction is pseudouridine(1915) in 23S rRNA + S-adenosyl-L-methionine = N(3)-methylpseudouridine(1915) in 23S rRNA + S-adenosyl-L-homocysteine + H(+). Its function is as follows. Specifically methylates the pseudouridine at position 1915 (m3Psi1915) in 23S rRNA. This Campylobacter hominis (strain ATCC BAA-381 / DSM 21671 / CCUG 45161 / LMG 19568 / NCTC 13146 / CH001A) protein is Ribosomal RNA large subunit methyltransferase H.